The chain runs to 457 residues: Probable xyloglucan 6-xylosyltransferase 5 (457 aa).

The tract at residues 1-40 (MGQDGSPAHKRPSGSGGGLPTTTLTNGGGRGGRGGLLPRG) is disordered. Residues 1–51 (MGQDGSPAHKRPSGSGGGLPTTTLTNGGGRGGRGGLLPRGRQMQKTFNNIK) are Cytoplasmic-facing. Over residues 26-37 (NGGGRGGRGGLL) the composition is skewed to gly residues. The chain crosses the membrane as a helical; Signal-anchor for type II membrane protein span at residues 52–72 (ITILCGFVTILVLRGTIGVGN). Residues 73–457 (LGSSSADAVN…RTPVETKPQN (385 aa)) lie on the Lumenal side of the membrane. The interval 97-116 (RSDSDPTDLDEPQEGDMNPN) is disordered. Residues 101–110 (DPTDLDEPQE) are compositionally biased toward acidic residues. Residues Asn116 and Asn432 are each glycosylated (N-linked (GlcNAc...) asparagine).

This sequence belongs to the glycosyltransferase 34 family. Interacts with XXT2 and CSLC4. Interacts with FUT1 and XLT2. As to expression, highly expressed in roots, stems and cauline leaves, and at lower levels in rosette leaves, flowers and siliques.

Its subcellular location is the golgi apparatus membrane. The catalysed reaction is Transfers an alpha-D-xylosyl residue from UDP-D-xylose to a glucose residue in xyloglucan, forming an alpha-(1-&gt;6)-D-xylosyl-D-glucose linkage.. Functionally, probable xyloglucan xylosyltransferase involved in the biosynthesis of xyloglucan in roots. May act in association with XXT1 and XXT2. Associates with other xyloglucan-synthesizing enzymes to form multiprotein complexes for xyloglucan synthesis in the Golgi. The sequence is that of Probable xyloglucan 6-xylosyltransferase 5 from Arabidopsis thaliana (Mouse-ear cress).